The following is an 862-amino-acid chain: DNA mismatch repair protein MutS (862 aa).

Residue 603-610 participates in ATP binding; it reads GPNMSGKS.

Belongs to the DNA mismatch repair MutS family.

This protein is involved in the repair of mismatches in DNA. It is possible that it carries out the mismatch recognition step. This protein has a weak ATPase activity. The sequence is that of DNA mismatch repair protein MutS from Bacillus velezensis (strain DSM 23117 / BGSC 10A6 / LMG 26770 / FZB42) (Bacillus amyloliquefaciens subsp. plantarum).